Reading from the N-terminus, the 326-residue chain is MYEQQQHFMDLQSDSGFGDDSSWLAGDDDLRLSPHQSAAGTNSGNENLDRRLLKDLVEMVPLIEHYMEHKERSSFKRRGSMIYTKMPSKESLSRRGRNASQTVPGRKKRDQEGNDDVMNNSREDDENAKALAGAEKEEMSRLREQVNDLQTKLSEKEEVLKSMEMSKNQVNEIQEKLEATNRLVAEKDMLIKSMQLQLSDTKIKLADKQAALEKTQWEAKTTGTRAIKLQEQLDAVEGDISTFTRVFETLAKTDSKKPDRDYDAVPYEFDHLPYLDDVDETDLRKMEEARLAYVAAVNTAKEREDEESLVMAAQARAYLQSLAFTY.

Polar residues-rich tracts occupy residues 1 to 15 and 34 to 46; these read MYEQ…QSDS and PHQS…SGNE. Disordered stretches follow at residues 1 to 46 and 71 to 132; these read MYEQ…SGNE and ERSS…KALA. The stretch at 132 to 183 forms a coiled coil; sequence AGAEKEEMSRLREQVNDLQTKLSEKEEVLKSMEMSKNQVNEIQEKLEATNRL.

Belongs to the microtubule binding protein 2C family. In terms of assembly, interacts with STM. Expressed in seedlings, roots, flowers and developing ovules.

Its subcellular location is the cytoplasm. It localises to the cytoskeleton. Prevents homeodomain proteins (e.g. STM) association to plasmodesmata and, consequently, cell-to-cell transport. Binds to RNA. Alters STM RNA binding capacity. Regulates cytoskeleton (e.g. actin) organization that determinates cell shape. Regulates stomata patterning and drought tolerance. Involved in restricting tobamovirus (e.g. oilseed rape mosaic virus) infectivity, probably by interfering with cell-to-cell virus movement. This chain is Protein MICROTUBULE BINDING PROTEIN 2C, found in Arabidopsis thaliana (Mouse-ear cress).